The chain runs to 611 residues: Lanthanide-dependent methanol dehydrogenase (611 aa).

Residues 1–34 (MTVKLKKPKKYAVAKNATLLAAFGLIGSLSLAKA) form the signal peptide. Cysteines 138 and 139 form a disulfide. Positions 144, 188, 203, 204, and 205 each coordinate pyrroloquinoline quinone. Glu206 contributes to the Ce(3+) binding site. Glu206 provides a ligand contact to Eu(3+). Pyrroloquinoline quinone contacts are provided by Thr270 and Trp272. Ce(3+) is bound by residues Asn290, Asp333, and Asp335. Residues Asn290, Asp333, and Asp335 each coordinate Eu(3+). Arg360 lines the pyrroloquinoline quinone pocket. A disulfide bridge links Cys414 with Cys443. Residues Trp501 and Trp566 each contribute to the pyrroloquinoline quinone site.

It belongs to the bacterial PQQ dehydrogenase family. As to quaternary structure, homodimer. Ce(3+) serves as cofactor. Requires La(3+) as cofactor. It depends on Nd(3+) as a cofactor. The cofactor is Pr(3+). Eu(3+) is required as a cofactor. Pyrroloquinoline quinone serves as cofactor.

It localises to the periplasm. The catalysed reaction is 2 Fe(III)-[cytochrome cL] + methanol = 2 Fe(II)-[cytochrome cL] + formaldehyde + 2 H(+). The enzyme catalyses 4 Fe(III)-[cytochrome cL] + methanol + H2O = 4 Fe(II)-[cytochrome cL] + formate + 5 H(+). It catalyses the reaction 2 Fe(III)-[cytochrome cL] + a primary alcohol = 2 Fe(II)-[cytochrome cL] + an aldehyde + 2 H(+). Its pathway is one-carbon metabolism; methanol degradation. Its function is as follows. Catalyzes the oxidation of methanol to formaldehyde or formate in the presence of lanthanides (Ln). Is a key enzyme in methane/methanol metabolism, allowing M.fumariolicum to grow on methane as the sole carbon and energy source. Can also act on other primary alcohols in vitro, such as ethanol, 1-propanol, 1-butanol, and 1-hexanol, but is not able to oxidize secondary alcohols and acetaldehyde. Uses a specific cytochrome cL, encoded by the adjacent gene in the locus, as electron acceptor. In Methylacidiphilum fumariolicum (strain SolV), this protein is Lanthanide-dependent methanol dehydrogenase.